The chain runs to 393 residues: Zinc finger CCHC domain-containing protein 18 (393 aa).

Disordered stretches follow at residues Val-281–Ala-300 and Asp-313–Lys-341. 2 stretches are compositionally biased toward polar residues: residues Pro-291–Ala-300 and Pro-320–Asn-331. A CCHC-type zinc finger spans residues Ile-346–Asn-363.

Belongs to the ZCCHC12 family.

This is Zinc finger CCHC domain-containing protein 18 from Mus musculus (Mouse).